The sequence spans 290 residues: Protein MGF 110-9L (290 aa).

Transmembrane regions (helical) follow at residues 1-19, 128-148, and 163-183; these read MKVIVFLLVLLEMQRVIQN, VENIKHTCLCMVATIALMVYI, and LLIFLGIYLLLGILMTNIIMN. Residues Asn242 and Asn267 are each glycosylated (N-linked (GlcNAc...) asparagine; by host).

It belongs to the asfivirus MGF 110 family.

The protein resides in the host membrane. In terms of biological role, plays a role in virus cell tropism, and may be required for efficient virus replication in macrophages. This is Protein MGF 110-9L from Ornithodoros (relapsing fever ticks).